A 125-amino-acid polypeptide reads, in one-letter code: Small ribosomal subunit protein eS6 (125 aa).

Belongs to the eukaryotic ribosomal protein eS6 family.

The protein is Small ribosomal subunit protein eS6 of Pyrococcus abyssi (strain GE5 / Orsay).